The chain runs to 354 residues: UPF0283 membrane protein HI_0043 (354 aa).

The next 3 helical transmembrane spans lie at 57-77 (LLKFTALLFGLATVAQSVQWI), 87-107 (IYLAFALVSLIIILLGIKEII), and 211-231 (ESAVIVAISPLAVVDMFFIAW).

This sequence belongs to the UPF0283 family.

The protein resides in the cell inner membrane. The protein is UPF0283 membrane protein HI_0043 of Haemophilus influenzae (strain ATCC 51907 / DSM 11121 / KW20 / Rd).